The following is a 946-amino-acid chain: MKPLSSPLQQYWQTVVERLPEPLAEESLSAQAKSVLTFSDFVQDSVIAHPEWLTELESQPPQADEWQHYAAWLQEALSNVSDEAGLMRELRLFRRRIMVRIAWAQTLALVTEESILQQLSHLAEMLIVAARDWLYDACCREWGTPCNAQGEAQPLLILGMGKLGGGELNFSSDIDLIFAWPEHGCTQGGRRELDNAQFFTRMGQRLIKVLDQPTQDGFVYRVDMRLRPFGESGPLVLSFAALEDYYQEQGRDWERYAMVKARIMGDSDGVYANELRAMLRPFVFRRYIDFSVIQSLRNMKGMIAREVRRRGLTDNIKLGAGGIREIEFIVQVFQLIRGGREPSLQSRSLLPTLSAIAALHLLSENDAEQLRVAYLFLRRLENLLQSINDEQTQTLPFDELNRARLAWAMDFADWPQLTGVLTAHMANVRRVFNELIGDDESETQEESLSEQWRELWQDALQEDDTTPVLAHLSEDDRKQVLMLIADFRKELDKRTIGPRGRQVLDHLMPHLLSDVCAREDAAVTLSRITALLVGIVTRTTYLELLSEFPAALKHLISLCAASPMIASQLARYPLLLDELLDPNTLYQPTATDAYRDELRQYLLRVPEDDEEQQLEALRQFKQAQLLRIAAADIAGTLPVMKVSDHLTWLAEAMIDAVVQQAWVQMVARYGKPNHLNEREGRGFAVVGYGKLGGWELGYSSDLDLIFLHDCPMDAMTDGEREIDGRQFYLRLAQRIMHLFSTRTSSGILYEVDARLRPSGAAGMLVTSAEAFADYQKNEAWTWEHQALVRARVVYGDPQLTAHFDAVRREIMTLPREGKTLQTEVREMREKMRAHLGNKHRDRFDIKADEGGITDIEFITQYLVLRYAHEKPKLTRWSDNVRILELLAQNDIMEEQEAMALTRAYTTLRDELHHLALQELPGHVSEDCFTAERELVRASWQKWLVEE.

The segment at 1 to 440 (MKPLSSPLQQ…VFNELIGDDE (440 aa)) is adenylyl removase. Residues 449–946 (SEQWRELWQD…ASWQKWLVEE (498 aa)) are adenylyl transferase.

This sequence belongs to the GlnE family. The cofactor is Mg(2+).

It carries out the reaction [glutamine synthetase]-O(4)-(5'-adenylyl)-L-tyrosine + phosphate = [glutamine synthetase]-L-tyrosine + ADP. The catalysed reaction is [glutamine synthetase]-L-tyrosine + ATP = [glutamine synthetase]-O(4)-(5'-adenylyl)-L-tyrosine + diphosphate. Its function is as follows. Involved in the regulation of glutamine synthetase GlnA, a key enzyme in the process to assimilate ammonia. When cellular nitrogen levels are high, the C-terminal adenylyl transferase (AT) inactivates GlnA by covalent transfer of an adenylyl group from ATP to specific tyrosine residue of GlnA, thus reducing its activity. Conversely, when nitrogen levels are low, the N-terminal adenylyl removase (AR) activates GlnA by removing the adenylyl group by phosphorolysis, increasing its activity. The regulatory region of GlnE binds the signal transduction protein PII (GlnB) which indicates the nitrogen status of the cell. The protein is Bifunctional glutamine synthetase adenylyltransferase/adenylyl-removing enzyme of Escherichia coli O81 (strain ED1a).